A 265-amino-acid chain; its full sequence is Type II pantothenate kinase (265 aa).

Residue 6 to 13 participates in ATP binding; sequence DAGGTLIK. Glu70 acts as the Proton acceptor in catalysis. ATP is bound by residues Thr99, 121–125, Tyr137, and Ser225; that span reads GGMIQ.

The protein belongs to the type II pantothenate kinase family. Homodimer.

It is found in the cytoplasm. It carries out the reaction (R)-pantothenate + ATP = (R)-4'-phosphopantothenate + ADP + H(+). It functions in the pathway cofactor biosynthesis; coenzyme A biosynthesis; CoA from (R)-pantothenate: step 1/5. In terms of biological role, catalyzes the phosphorylation of pantothenate (Pan), the first step in CoA biosynthesis. This chain is Type II pantothenate kinase, found in Staphylococcus epidermidis (strain ATCC 12228 / FDA PCI 1200).